Reading from the N-terminus, the 206-residue chain is Small ribosomal subunit protein uS4A (206 aa).

Positions 98–164 constitute an S4 RNA-binding domain; sequence MRLDNVVYKL…EKFKTFAENP (67 aa).

It belongs to the universal ribosomal protein uS4 family. As to quaternary structure, part of the 30S ribosomal subunit. Contacts protein S5. The interaction surface between S4 and S5 is involved in control of translational fidelity.

Functionally, one of the primary rRNA binding proteins, it binds directly to 16S rRNA where it nucleates assembly of the body of the 30S subunit. Its function is as follows. With S5 and S12 plays an important role in translational accuracy. The chain is Small ribosomal subunit protein uS4A from Clostridium novyi (strain NT).